Consider the following 353-residue polypeptide: Spermidine/putrescine import ATP-binding protein PotA (353 aa).

In terms of domain architecture, ABC transporter spans 7-237; sequence IRFERVTKEY…PINRFVADFI (231 aa). 39 to 46 lines the ATP pocket; the sequence is GPSGCGKT.

Belongs to the ABC transporter superfamily. Spermidine/putrescine importer (TC 3.A.1.11.1) family. The complex is composed of two ATP-binding proteins (PotA), two transmembrane proteins (PotB and PotC) and a solute-binding protein (PotD).

It localises to the cell membrane. It carries out the reaction ATP + H2O + polyamine-[polyamine-binding protein]Side 1 = ADP + phosphate + polyamineSide 2 + [polyamine-binding protein]Side 1.. Part of the ABC transporter complex PotABCD involved in spermidine/putrescine import. Responsible for energy coupling to the transport system. The protein is Spermidine/putrescine import ATP-binding protein PotA of Geobacillus kaustophilus (strain HTA426).